We begin with the raw amino-acid sequence, 338 residues long: tRNA N6-adenosine threonylcarbamoyltransferase (338 aa).

His-114 and His-118 together coordinate Fe cation. Residues 137 to 141, Asp-170, Gly-183, Asp-187, and Asn-277 each bind substrate; that span reads IVSGG. A Fe cation-binding site is contributed by Asp-305.

The protein belongs to the KAE1 / TsaD family. Fe(2+) serves as cofactor.

The protein localises to the cytoplasm. The enzyme catalyses L-threonylcarbamoyladenylate + adenosine(37) in tRNA = N(6)-L-threonylcarbamoyladenosine(37) in tRNA + AMP + H(+). Functionally, required for the formation of a threonylcarbamoyl group on adenosine at position 37 (t(6)A37) in tRNAs that read codons beginning with adenine. Is involved in the transfer of the threonylcarbamoyl moiety of threonylcarbamoyl-AMP (TC-AMP) to the N6 group of A37, together with TsaE and TsaB. TsaD likely plays a direct catalytic role in this reaction. The chain is tRNA N6-adenosine threonylcarbamoyltransferase from Clostridioides difficile (strain 630) (Peptoclostridium difficile).